The primary structure comprises 687 residues: Mitochondrial 15S rRNA processing factor ppr3 (687 aa).

A mitochondrion-targeting transit peptide spans Met1 to Cys49. PPR repeat units follow at residues Asn262 to Pro296, Ser297 to Ile331, Ser334 to Pro368, and Thr372 to Pro407.

The protein belongs to the CCM1 family. Binds to mitochondrial small subunit 15S rRNA.

It localises to the mitochondrion. Its function is as follows. Regulates mitochondrial small subunit maturation by controlling 15S rRNA 5'-end processing. Localizes to the 5' precursor of the 15S rRNA in a position that is subsequently occupied by mS47 in the mature yeast mtSSU. Uses structure and sequence-specific RNA recognition, binding to a single-stranded region of the precursor and specifically recognizing bases -6 to -1. The exchange of Ccm1 for mS47 is coupled to the irreversible removal of precursor rRNA that is accompanied by conformational changes of the mitoribosomal proteins uS5m and mS26. These conformational changes signal completion of 5'-end rRNA processing through protection of the mature 5'-end of the 15S rRNA and stabilization of mS47. The removal of the 5' precursor together with the dissociation of Ccm1 may be catalyzed by the 5'-3' exoribonuclease Pet127. Involved in the specific removal of group I introns in mitochondrial encoded transcripts. This chain is Mitochondrial 15S rRNA processing factor ppr3, found in Schizosaccharomyces pombe (strain 972 / ATCC 24843) (Fission yeast).